Reading from the N-terminus, the 112-residue chain is T cell receptor alpha variable 7 (112 aa).

The signal sequence occupies residues 1–21 (MEKMRRPVLIIFCLCLGWANG). One can recognise an Ig-like domain in the interval 22-112 (ENQVEHSPHF…DSATYFCAVD (91 aa)). Cysteine 44 and cysteine 109 are joined by a disulfide. N-linked (GlcNAc...) asparagine glycans are attached at residues asparagine 84 and asparagine 90.

In terms of assembly, alpha-beta TR is a heterodimer composed of an alpha and beta chain; disulfide-linked. The alpha-beta TR is associated with the transmembrane signaling CD3 coreceptor proteins to form the TR-CD3 (TcR or TCR). The assembly of alpha-beta TR heterodimers with CD3 occurs in the endoplasmic reticulum where a single alpha-beta TR heterodimer associates with one CD3D-CD3E heterodimer, one CD3G-CD3E heterodimer and one CD247 homodimer forming a stable octameric structure. CD3D-CD3E and CD3G-CD3E heterodimers preferentially associate with TR alpha and TR beta chains, respectively. The association of the CD247 homodimer is the last step of TcR assembly in the endoplasmic reticulum and is required for transport to the cell surface.

The protein localises to the cell membrane. Its function is as follows. V region of the variable domain of T cell receptor (TR) alpha chain that participates in the antigen recognition. Alpha-beta T cell receptors are antigen specific receptors which are essential to the immune response and are present on the cell surface of T lymphocytes. Recognize peptide-major histocompatibility (MH) (pMH) complexes that are displayed by antigen presenting cells (APC), a prerequisite for efficient T cell adaptive immunity against pathogens. Binding of alpha-beta TR to pMH complex initiates TR-CD3 clustering on the cell surface and intracellular activation of LCK that phosphorylates the ITAM motifs of CD3G, CD3D, CD3E and CD247 enabling the recruitment of ZAP70. In turn ZAP70 phosphorylates LAT, which recruits numerous signaling molecules to form the LAT signalosome. The LAT signalosome propagates signal branching to three major signaling pathways, the calcium, the mitogen-activated protein kinase (MAPK) kinase and the nuclear factor NF-kappa-B (NF-kB) pathways, leading to the mobilization of transcription factors that are critical for gene expression and essential for T cell growth and differentiation. The T cell repertoire is generated in the thymus, by V-(D)-J rearrangement. This repertoire is then shaped by intrathymic selection events to generate a peripheral T cell pool of self-MH restricted, non-autoaggressive T cells. Post-thymic interaction of alpha-beta TR with the pMH complexes shapes TR structural and functional avidity. This is T cell receptor alpha variable 7 from Homo sapiens (Human).